A 61-amino-acid chain; its full sequence is Potassium channel toxin alpha-KTx 6.8 (61 aa).

The first 23 residues, 1-23 (MNAKFILLLLVVTTTILLPDTQG), serve as a signal peptide directing secretion. Cystine bridges form between Cys29-Cys50, Cys35-Cys55, Cys39-Cys57, and Cys45-Cys60. Cys60 carries the post-translational modification Cysteine amide.

It belongs to the short scorpion toxin superfamily. Potassium channel inhibitor family. Alpha-KTx 06 subfamily. Expressed by the venom gland.

The protein localises to the secreted. In terms of biological role, blocker of voltage-gated potassium channels. This chain is Potassium channel toxin alpha-KTx 6.8, found in Opistophthalmus carinatus (African yellow leg scorpion).